A 58-amino-acid chain; its full sequence is ISEVKMDAEFRHDSGYEVHHQKLVFFAEDVGSNKGAIIGLMVGGVVIATVIVITLVML.

Residues 1–34 (ISEVKMDAEFRHDSGYEVHHQKLVFFAEDVGSNK) lie on the Extracellular side of the membrane. The Cu(2+) site is built by H12, Y16, H19, and H20. Zn(2+) contacts are provided by H12, Y16, H19, and H20. The helical transmembrane segment at 35–58 (GAIIGLMVGGVVIATVIVITLVML) threads the bilayer.

It belongs to the APP family. Binds, via its C-terminus, to the PID domain of several cytoplasmic proteins, including APBB family members, the APBA family, MAPK8IP1, SHC1 and NUMB and DAB1. Binding to DAB1 inhibits its serine phosphorylation. Interacts (via NPXY motif) with DAB2 (via PID domain); the interaction is impaired by tyrosine phosphorylation of the NPXY motif. Also interacts with GPCR-like protein BPP, APPBP1, IB1, KNS2 (via its TPR domains), APPBP2 (via BaSS) and DDB1. In vitro, it binds MAPT via the MT-binding domains. Associates with microtubules in the presence of ATP and in a kinesin-dependent manner. Interacts, through a C-terminal domain, with GNAO1. Interacts with CPEB1, ANKS1B and AGER. Interacts with ITM2B. Interacts with ITM2C. Interacts with IDE. Can form homodimers; dimerization is enhanced in the presence of Cu(2+) ions. Can form homodimers; this is promoted by heparin binding. Interacts with SORL1 (via N-terminal ectodomain); this interaction retains APP in the trans-Golgi network and reduces processing into soluble APP-alpha and amyloid-beta peptides. Interacts with PLD3. Interacts with VDAC1. Interacts with NSG1; could regulate APP processing. Amyloid-beta protein 42 interacts with FPR2. Interacts with LRRK2. Interacts (via cytoplasmic domain) with KIF5B. Interacts (via C-terminus) with APBB2/FE65L1 (via C-terminus). Interacts (via intracellular domain) with APBB3. Post-translationally, proteolytically processed under normal cellular conditions. Cleavage either by alpha-secretase, beta-secretase or theta-secretase leads to generation and extracellular release of soluble APP peptides, S-APP-alpha and S-APP-beta, and the retention of corresponding membrane-anchored C-terminal fragments, C80, C83 and C99. Subsequent processing of C80 and C83 by gamma-secretase yields P3 peptides. This is the major secretory pathway and is non-amyloidogenic. Alternatively, presenilin/nicastrin-mediated gamma-secretase processing of C99 releases the amyloid-beta proteins, amyloid-beta protein 40 and amyloid-beta protein 42, major components of amyloid plaques, and the cytotoxic C-terminal fragments, gamma-CTF(50), gamma-CTF(57) and gamma-CTF(59). PSEN1 cleavage is more efficient with C83 than with C99 as substrate (in vitro). Amyloid-beta protein 40 and Amyloid-beta protein 42 are cleaved by ACE. Many other minor amyloid-beta peptides, amyloid-beta 1-X peptides, are found in cerebral spinal fluid (CSF) including the amyloid-beta X-15 peptides, produced from the cleavage by alpha-secretase.

It is found in the cell membrane. The protein localises to the membrane. Its subcellular location is the perikaryon. The protein resides in the cell projection. It localises to the growth cone. It is found in the clathrin-coated pit. The protein localises to the early endosome. Its subcellular location is the cytoplasmic vesicle. The protein resides in the secreted. It localises to the cell surface. It is found in the nucleus. The protein localises to the cytoplasm. Its function is as follows. Functions as a cell surface receptor and performs physiological functions on the surface of neurons relevant to neurite growth, neuronal adhesion and axonogenesis. Interaction between APP molecules on neighboring cells promotes synaptogenesis. Involved in cell mobility and transcription regulation through protein-protein interactions. Can promote transcription activation through binding to APBB1-KAT5 and inhibit Notch signaling through interaction with Numb. Couples to apoptosis-inducing pathways such as those mediated by G(o) and JIP. Inhibits G(o)-alpha ATPase activity. Acts as a kinesin I membrane receptor, mediating the axonal transport of beta-secretase and presenilin 1. By acting as a kinesin I membrane receptor, plays a role in axonal anterograde transport of cargo towards synapses in axons. May be involved in copper homeostasis/oxidative stress through copper ion reduction. In vitro, copper-metallated APP induces neuronal death directly or is potentiated through Cu(2+)-mediated low-density lipoprotein oxidation. Can regulate neurite outgrowth through binding to components of the extracellular matrix such as heparin and collagen I and IV. Induces a AGER-dependent pathway that involves activation of p38 MAPK, resulting in internalization of amyloid-beta peptide and mitochondrial dysfunction in cultured cortical neurons. Provides Cu(2+) ions for GPC1 which are required for release of nitric oxide (NO) and subsequent degradation of the heparan sulfate chains on GPC1. This is Amyloid-beta precursor protein (APP) from Canis lupus familiaris (Dog).